The sequence spans 310 residues: Cytosolic Fe-S cluster assembly factor Nubp1 homolog (310 aa).

[4Fe-4S] cluster is bound by residues Cys8, Cys22, Cys25, and Cys31. An ATP-binding site is contributed by 62 to 69; sequence GKGGVGKS. [4Fe-4S] cluster contacts are provided by Cys239 and Cys242.

This sequence belongs to the Mrp/NBP35 ATP-binding proteins family. NUBP1/NBP35 subfamily. In terms of assembly, heterotetramer of 2 Nubp1 and 2 Nubp2 chains. [4Fe-4S] cluster serves as cofactor.

Its subcellular location is the cytoplasm. Component of the cytosolic iron-sulfur (Fe/S) protein assembly (CIA) machinery. Required for maturation of extramitochondrial Fe-S proteins. The Nubp1-Nubp2 heterotetramer forms a Fe-S scaffold complex, mediating the de novo assembly of an Fe-S cluster and its transfer to target apoproteins. This is Cytosolic Fe-S cluster assembly factor Nubp1 homolog from Drosophila willistoni (Fruit fly).